The following is a 184-amino-acid chain: Ribosome-recycling factor (184 aa).

Belongs to the RRF family.

It is found in the cytoplasm. Its function is as follows. Responsible for the release of ribosomes from messenger RNA at the termination of protein biosynthesis. May increase the efficiency of translation by recycling ribosomes from one round of translation to another. In Psychrobacter sp. (strain PRwf-1), this protein is Ribosome-recycling factor.